Reading from the N-terminus, the 334-residue chain is Aspartate carbamoyltransferase catalytic subunit (334 aa).

Carbamoyl phosphate-binding residues include R71 and T72. K99 is an L-aspartate binding site. Residues R121, H151, and Q154 each contribute to the carbamoyl phosphate site. Residues R184 and R239 each coordinate L-aspartate. 2 residues coordinate carbamoyl phosphate: G280 and P281.

This sequence belongs to the aspartate/ornithine carbamoyltransferase superfamily. ATCase family. Heterododecamer (2C3:3R2) of six catalytic PyrB chains organized as two trimers (C3), and six regulatory PyrI chains organized as three dimers (R2).

It catalyses the reaction carbamoyl phosphate + L-aspartate = N-carbamoyl-L-aspartate + phosphate + H(+). The protein operates within pyrimidine metabolism; UMP biosynthesis via de novo pathway; (S)-dihydroorotate from bicarbonate: step 2/3. Catalyzes the condensation of carbamoyl phosphate and aspartate to form carbamoyl aspartate and inorganic phosphate, the committed step in the de novo pyrimidine nucleotide biosynthesis pathway. The protein is Aspartate carbamoyltransferase catalytic subunit of Pseudomonas fluorescens biotype A.